We begin with the raw amino-acid sequence, 387 residues long: 3-ketoacyl-CoA thiolase (387 aa).

C91 serves as the catalytic Acyl-thioester intermediate. Residues H343 and C373 each act as proton acceptor in the active site.

Belongs to the thiolase-like superfamily. Thiolase family. As to quaternary structure, heterotetramer of two alpha chains (FadB) and two beta chains (FadA).

Its subcellular location is the cytoplasm. It carries out the reaction an acyl-CoA + acetyl-CoA = a 3-oxoacyl-CoA + CoA. It functions in the pathway lipid metabolism; fatty acid beta-oxidation. Catalyzes the final step of fatty acid oxidation in which acetyl-CoA is released and the CoA ester of a fatty acid two carbons shorter is formed. The protein is 3-ketoacyl-CoA thiolase of Enterobacter sp. (strain 638).